The sequence spans 76 residues: Demidefensin-3 (76 aa).

The first 22 residues, Met-1–Ala-22, serve as a signal peptide directing secretion. The propeptide occupies Arg-23 to Leu-64. Residues Ala-25 to His-45 are disordered. Over residues Ala-30–Ala-44 the composition is skewed to low complexity. An intrachain disulfide couples Cys-68 to Cys-73. Positions Arg-74 to Leu-76 are excised as a propeptide.

The protein belongs to the alpha-defensin family. Theta subfamily. In terms of assembly, forms a cyclic homodimer; disulfide-linked. This is a cyclic peptide.

Has antimicrobial activities against bacteria and fungi. The sequence is that of Demidefensin-3 from Macaca mulatta (Rhesus macaque).